Reading from the N-terminus, the 264-residue chain is Undecaprenyl-diphosphatase 2 (264 aa).

7 consecutive transmembrane segments (helical) span residues Gly29–Trp49, Ser77–Leu97, Leu107–Phe127, Ala137–Val157, Phe180–Leu200, Val212–Met232, and Phe243–Leu263.

The protein belongs to the UppP family.

Its subcellular location is the cell inner membrane. It catalyses the reaction di-trans,octa-cis-undecaprenyl diphosphate + H2O = di-trans,octa-cis-undecaprenyl phosphate + phosphate + H(+). Catalyzes the dephosphorylation of undecaprenyl diphosphate (UPP). Confers resistance to bacitracin. This chain is Undecaprenyl-diphosphatase 2, found in Mesorhizobium japonicum (strain LMG 29417 / CECT 9101 / MAFF 303099) (Mesorhizobium loti (strain MAFF 303099)).